A 3955-amino-acid chain; its full sequence is Nonribosomal peptide synthetase fmqA (3955 aa).

Residues 293–691 (SYSELETLSL…AQACCTIRNV (399 aa)) form an adenylation 1 region. In terms of domain architecture, Carrier 1 spans 806–879 (THKETLIHQL…DLARLTDVVN (74 aa)). Serine 840 is subject to O-(pantetheine 4'-phosphoryl)serine. The condensation 1 stretch occupies residues 916 to 1187 (QDIYPCTPLQ…IATVPLRVRL (272 aa)). The interval 1371–1766 (TYAELGELSD…DEVEKHVYQC (396 aa)) is adenylation 2. The 77-residue stretch at 1880–1956 (EPTSVAEREM…KIMSHESSLS (77 aa)) folds into the Carrier 2 domain. Serine 1917 bears the O-(pantetheine 4'-phosphoryl)serine mark. The tract at residues 1970–2261 (FALSPIQQMF…FTTMWPVVAE (292 aa)) is epimerase. Residues 2438–2724 (EDIYPCSPSQ…FNPLPCRVHL (287 aa)) form a condensation 2 region. Residues 2906–3299 (TYGQLDELSS…GEVEANVQHC (394 aa)) form an adenylation 3 region. The Carrier 3 domain maps to 3422-3498 (APSTEEEKKL…DLAKVAVPKS (77 aa)). Serine 3459 is subject to O-(pantetheine 4'-phosphoryl)serine. A condensation 3 region spans residues 3541–3805 (PGTQAQQFFI…CLNFIPLRVM (265 aa)).

This sequence belongs to the NRP synthetase family. Interacts with the mitogen-activated protein kinase mpkA.

Its subcellular location is the cytoplasmic vesicle. The protein operates within alkaloid biosynthesis. Functionally, nonribosomal peptide synthetase; part of the gene cluster that mediates the biosynthesis of the antitumor fumiquinazolines that confer a dual-usage capability to defend against phagocytes in the environment and animal hosts. The simplest member is fumiquinazoline F (FQF) with a 6-6-6 tricyclic core derived from anthranilic acid (Ant), tryptophan (Trp), and alanine (Ala). The trimodular NRPS fmqA is responsible for FQF formation. Modules 1, 2 and 3 of fmqA are predicted to activate and load Ant, Trp and Ala, respectively, providing for the assembly of an Ant-Trp-Ala-S-enzyme intermediate that would undergo double cyclization for chain release and generation of the tricyclic 6-6-6 product fumiquinazoline F. The presence of an E domain predicted for module 2 of fmqA is consistent with epimerization of L-Trp to D-Trp during assembly to generate the R-stereocenter at C14 of FQF. The FAD-dependent monooxygenase fmqB and the monomodular NRPS fmqC then maturate FQF to FQA. FmqB oxidizes the 2',3'-double bond of the indole side chain of FQF, and fmqC activates L-Ala as the adenylate, installs it as the pantetheinyl thioester on its carrier protein domain, and acylates the oxidized indole for subsequent intramolecular cyclization to create the 6-5-5-imidazolindolone of FQA. The FAD-linked oxidoreductase fmqD introduces a third layer of scaffold complexity by converting FQA to the spirohemiaminal FQC, presumably by catalyzing the formation of a transient imine within the pyrazinone ring. FQC subsequently converts nonenzymatically to the known cyclic aminal FQD. This is Nonribosomal peptide synthetase fmqA from Aspergillus fumigatus (strain ATCC MYA-4609 / CBS 101355 / FGSC A1100 / Af293) (Neosartorya fumigata).